Reading from the N-terminus, the 494-residue chain is Alpha-amylase A (494 aa).

The first 18 residues, 1-18, serve as a signal peptide directing secretion; sequence MFLAKSIVCLALLAVANA. The residue at position 19 (Gln19) is a Pyrrolidone carboxylic acid. A disulfide bridge connects residues Cys46 and Cys102. Ca(2+) is bound by residues Asn116, Arg165, and Asp174. Cys153 and Cys167 are oxidised to a cystine. A chloride-binding site is contributed by Arg202. Asp204 functions as the Nucleophile in the catalytic mechanism. Position 208 (His208) interacts with Ca(2+). Glu241 acts as the Proton donor in catalysis. Chloride contacts are provided by Asn304 and Arg343. Intrachain disulfides connect Cys376-Cys382 and Cys448-Cys460.

This sequence belongs to the glycosyl hydrolase 13 family. In terms of assembly, monomer. It depends on Ca(2+) as a cofactor. Chloride serves as cofactor.

It carries out the reaction Endohydrolysis of (1-&gt;4)-alpha-D-glucosidic linkages in polysaccharides containing three or more (1-&gt;4)-alpha-linked D-glucose units.. The chain is Alpha-amylase A (Amy-p) from Drosophila melanogaster (Fruit fly).